The chain runs to 127 residues: uncharacterized protein (127 aa).

This sequence belongs to the transcriptional regulatory CopG/NikR family.

This is an uncharacterized protein from Methanocaldococcus jannaschii (strain ATCC 43067 / DSM 2661 / JAL-1 / JCM 10045 / NBRC 100440) (Methanococcus jannaschii).